The primary structure comprises 359 residues: Uroporphyrinogen decarboxylase (359 aa).

7 residues coordinate coproporphyrinogen III: arginine 28, alanine 30, arginine 32, aspartate 79, tyrosine 157, serine 212, and histidine 335.

This sequence belongs to the uroporphyrinogen decarboxylase family. In terms of assembly, monomer.

It is found in the nucleus. Its subcellular location is the cytoplasm. It catalyses the reaction uroporphyrinogen III + 4 H(+) = coproporphyrinogen III + 4 CO2. The enzyme catalyses uroporphyrinogen I + 4 H(+) = coproporphyrinogen I + 4 CO2. It functions in the pathway porphyrin-containing compound metabolism; protoporphyrin-IX biosynthesis; coproporphyrinogen-III from 5-aminolevulinate: step 4/4. Its function is as follows. Catalyzes the sequential decarboxylation of four acetate groups of uroporphyrinogen-III (octacarboxyporphyrin) to yield coproporphyrinogen-III (tetracarboxyporphyrin) with the formation of intermediate hepta-, hexa- and penta-carboxylate porphyrinogens in the heme biosynthesis pathway. Acts on a number of porphyrinogens, but only coproporphyrinogen III can ultimately be converted to heme. This chain is Uroporphyrinogen decarboxylase (hem12), found in Schizosaccharomyces pombe (strain 972 / ATCC 24843) (Fission yeast).